The sequence spans 41 residues: Bacteriocin bavaricin-A (41 aa).

This sequence belongs to the bacteriocin class IIA/YGNGV family.

The protein resides in the secreted. In terms of biological role, this heat stable bacteriocin shows activity against species of Lactobacillus, Listeria monocytogenes, Pediococcus, Enterococcus, Leuconostoc and Lactococcus. This chain is Bacteriocin bavaricin-A, found in Latilactobacillus sakei (Lactobacillus sakei).